The primary structure comprises 751 residues: Photosystem I P700 chlorophyll a apoprotein A1 (751 aa).

Transmembrane regions (helical) follow at residues 73–96 (IFSA…FHGA), 159–182 (LYST…FHYH), 198–222 (MNHH…HVSL), 294–312 (TAHH…GHMY), 349–372 (WHAQ…HHMY), 388–414 (LSLF…IFMV), 436–458 (AIIS…LYIH), and 533–551 (FLVH…LILL). Positions 575 and 584 each coordinate [4Fe-4S] cluster. 2 helical membrane passes run 591 to 612 (HVFL…HFSW) and 665 to 687 (LSAY…MFLF). Residue histidine 676 coordinates chlorophyll a'. Residues methionine 684 and tyrosine 692 each contribute to the chlorophyll a site. A phylloquinone-binding site is contributed by tryptophan 693. Residues 725 to 745 (AVGVAHYLLGGIATTWAFFLA) form a helical membrane-spanning segment.

It belongs to the PsaA/PsaB family. The PsaA/B heterodimer binds the P700 chlorophyll special pair and subsequent electron acceptors. PSI consists of a core antenna complex that captures photons, and an electron transfer chain that converts photonic excitation into a charge separation. The eukaryotic PSI reaction center is composed of at least 11 subunits. Requires P700 is a chlorophyll a/chlorophyll a' dimer, A0 is one or more chlorophyll a, A1 is one or both phylloquinones and FX is a shared 4Fe-4S iron-sulfur center. as cofactor.

The protein resides in the plastid. The protein localises to the chloroplast thylakoid membrane. The enzyme catalyses reduced [plastocyanin] + hnu + oxidized [2Fe-2S]-[ferredoxin] = oxidized [plastocyanin] + reduced [2Fe-2S]-[ferredoxin]. In terms of biological role, psaA and PsaB bind P700, the primary electron donor of photosystem I (PSI), as well as the electron acceptors A0, A1 and FX. PSI is a plastocyanin/cytochrome c6-ferredoxin oxidoreductase, converting photonic excitation into a charge separation, which transfers an electron from the donor P700 chlorophyll pair to the spectroscopically characterized acceptors A0, A1, FX, FA and FB in turn. Oxidized P700 is reduced on the lumenal side of the thylakoid membrane by plastocyanin or cytochrome c6. The sequence is that of Photosystem I P700 chlorophyll a apoprotein A1 from Nephroselmis olivacea (Green alga).